Here is a 285-residue protein sequence, read N- to C-terminus: Chromatin modification-related protein YNG2 (285 aa).

Positions Leu19–Arg54 form a coiled coil. The span at Asn138 to Asn165 shows a compositional bias: polar residues. Positions Asn138–Asn218 are disordered. A compositionally biased stretch (basic and acidic residues) spans Met193–Ser207. The PHD-type zinc finger occupies Asn225–Lys276. Cys228, Cys230, Cys241, Cys246, His252, Cys255, Cys270, and Cys273 together coordinate Zn(2+).

This sequence belongs to the ING family. As to quaternary structure, interacts with H3K4me3 and to a lesser extent with H3K4me2. Component of the NuA4 histone acetyltransferase complex.

It is found in the nucleus. Its function is as follows. Component of the NuA4 histone acetyltransferase complex which is involved in transcriptional activation of selected genes principally by acetylation of nucleosomal histone H4 and H2A. The NuA4 complex is also involved in DNA repair. Involved in cell cycle progression and meiosis. The protein is Chromatin modification-related protein YNG2 (YNG2) of Debaryomyces hansenii (strain ATCC 36239 / CBS 767 / BCRC 21394 / JCM 1990 / NBRC 0083 / IGC 2968) (Yeast).